The primary structure comprises 103 residues: OMEGA-ectatommitoxin(02)-Rm1d (103 aa).

The first 30 residues, 1 to 30, serve as a signal peptide directing secretion; that stretch reads MKDSYISIVIAYLMVTFILVSSMPIEGEKR. Disulfide bonds link C39-C54, C49-C70, and C72-C81. Residues 43–82 form the EGF-like domain; sequence LNDENYCFNGKCVHLVAQDEPGKPYYSCICDEFYIGERCG.

The protein belongs to the EGF domain peptide family. Expressed by the venom gland.

The protein resides in the secreted. Its function is as follows. Ant peptide with probable defensive activity which acts as a potent agonist of the mammalian epidermal growth factor receptor (EGFR). Mimics, both structurally and functionally, vertebrate epidermal growth factor (EGF) peptide hormones. In vivo, intraplantar injection in mice causes long-lasting (several days) hypersensitivity of the injected paw to both mechanical and thermal stimuli. Its long-lasting effect is unusual for venom toxins whose effects are usually immediate. One possible explanation is that it would reduce the duration of a nest attack, discourage future attacks, or enhance the actions of subsequent exposure to other pain-inducing venom peptides. The protein is OMEGA-ectatommitoxin(02)-Rm1d of Rhytidoponera metallica (Australian green-headed ant).